The primary structure comprises 391 residues: NADH-quinone oxidoreductase subunit D (391 aa).

The protein belongs to the complex I 49 kDa subunit family. In terms of assembly, NDH-1 is composed of 14 different subunits. Subunits NuoB, C, D, E, F, and G constitute the peripheral sector of the complex.

It localises to the cell inner membrane. The enzyme catalyses a quinone + NADH + 5 H(+)(in) = a quinol + NAD(+) + 4 H(+)(out). NDH-1 shuttles electrons from NADH, via FMN and iron-sulfur (Fe-S) centers, to quinones in the respiratory chain. The immediate electron acceptor for the enzyme in this species is believed to be ubiquinone. Couples the redox reaction to proton translocation (for every two electrons transferred, four hydrogen ions are translocated across the cytoplasmic membrane), and thus conserves the redox energy in a proton gradient. The protein is NADH-quinone oxidoreductase subunit D of Rickettsia rickettsii (strain Sheila Smith).